Reading from the N-terminus, the 399-residue chain is MSKTIAINAGSSSLKWQLYQMPEEKVLAQGIIERIGLTDSISTVKYDGKKEEHILDIPDHTEAVKRLLNDLIHFGIIGTYDEITGVGHRIVAGGEYFKESVVVDDKVVEQVEELAALAPLHNPGAAAGIRAFRKILPDITSVCVFDTSFHTTMQKHTYLYPIPQKYYTDYKVRKYGAHGTSHKYVAEEAAKMLGRPLDELKLITAHVGNGVSITANYHGQSVDTSMGFTPLAGPMMGTRSGDIDPAIIPYLIAQDPELKDAADVVNMLNKQSGLGGVSGISSDMRDIEAGLQANNPDAVLAYNIFIDRIKKFIGQYFAVLNGADALVFTAGMGENAPLMRQDVVNGLSWFGMEIDPEKNVFGYRGDISTAASKVKVLVISTDEELCIARDVERLKQTIS.

Mg(2+) is bound at residue Asn8. An ATP-binding site is contributed by Lys15. Arg89 contributes to the substrate binding site. Asp146 (proton donor/acceptor) is an active-site residue. Residues 206–210 (HVGNG), 283–285 (DMR), and 331–335 (GMGEN) contribute to the ATP site. Mg(2+) is bound at residue Glu383.

The protein belongs to the acetokinase family. As to quaternary structure, homodimer. The cofactor is Mg(2+). Mn(2+) serves as cofactor.

The protein resides in the cytoplasm. The enzyme catalyses acetate + ATP = acetyl phosphate + ADP. It functions in the pathway metabolic intermediate biosynthesis; acetyl-CoA biosynthesis; acetyl-CoA from acetate: step 1/2. Its function is as follows. Catalyzes the formation of acetyl phosphate from acetate and ATP. Can also catalyze the reverse reaction. The sequence is that of Acetate kinase from Streptococcus equi subsp. equi (strain 4047).